The primary structure comprises 394 residues: MSKEKFERVKPHVNVGTIGHVDHGKTTLTAAICTTLAKVYGGAARDFASIDNAPEERERGITIATSHVEYDTPTRHYAHVDCPGHADYVKNMITGAAQMDGGILVVAATDGPMPQTREHILLGRQVGIPYIIVFMNKCDMVDDEELLELVEMEVRELLSEYDFPGDDLPVIQGSALGALNGEEQWEAKIVELAEALDSYIPEPERAVDMPFLMPIEDVFSIQGRGTVVTGRIERGILNVGDEVAIVGIKDTTTTTCTGVEMFRKLLDEGRAGENVGALLRGTKRDEVERGQVLAKPGSITPHTKFESEVYVLSKDEGGRHTPFFKGYRPQFYFRTTDVTGDISLPEGVEMVMPGDNIQMQVELIAPIAMDEGLRFAIREGGRTVGAGVVAKIFD.

The tr-type G domain occupies 10–204 (KPHVNVGTIG…ALDSYIPEPE (195 aa)). The interval 19-26 (GHVDHGKT) is G1. Residue 19-26 (GHVDHGKT) participates in GTP binding. Thr26 contributes to the Mg(2+) binding site. The interval 60–64 (GITIA) is G2. A G3 region spans residues 81–84 (DCPG). Residues 81-85 (DCPGH) and 136-139 (NKCD) each bind GTP. The interval 136-139 (NKCD) is G4. The interval 174-176 (SAL) is G5.

Belongs to the TRAFAC class translation factor GTPase superfamily. Classic translation factor GTPase family. EF-Tu/EF-1A subfamily. In terms of assembly, monomer.

Its subcellular location is the cytoplasm. The catalysed reaction is GTP + H2O = GDP + phosphate + H(+). Its function is as follows. GTP hydrolase that promotes the GTP-dependent binding of aminoacyl-tRNA to the A-site of ribosomes during protein biosynthesis. The polypeptide is Elongation factor Tu (Vibrio campbellii (strain ATCC BAA-1116)).